The following is a 100-amino-acid chain: Large ribosomal subunit protein bL21 (100 aa).

Belongs to the bacterial ribosomal protein bL21 family. In terms of assembly, part of the 50S ribosomal subunit. Contacts protein L20.

In terms of biological role, this protein binds to 23S rRNA in the presence of protein L20. This Rhodospirillum rubrum (strain ATCC 11170 / ATH 1.1.1 / DSM 467 / LMG 4362 / NCIMB 8255 / S1) protein is Large ribosomal subunit protein bL21.